Reading from the N-terminus, the 384-residue chain is Prokineticin receptor 2 (384 aa).

The Extracellular segment spans residues 1–53 (MAAQNGNASFPANFSIPQEHASSLPFNFSYDDYDLPLDEDEDMTKTQTFFAAK). 3 N-linked (GlcNAc...) asparagine glycosylation sites follow: asparagine 7, asparagine 13, and asparagine 27. A helical transmembrane segment spans residues 54–74 (IVIGVALVGIMLTCGIGNFVF). Over 75–89 (ITALTRYKKLRNLTN) the chain is Cytoplasmic. Residues 90–110 (LLIANLAISDFLVAIICCPFE) traverse the membrane as a helical segment. The Extracellular segment spans residues 111 to 137 (MDYYVVHQLSWEHGHVLCACINYLRTV). A disulfide bridge links cysteine 128 with cysteine 208. Residues 138-158 (SLYVSTNALLAIAIDRYLAIV) form a helical membrane-spanning segment. The Cytoplasmic portion of the chain corresponds to 159–171 (HPLKPRMNYQTAS). A helical membrane pass occupies residues 172-192 (FLIALVWMVSILISIPSAYFT). Over 193 to 223 (KETVLFIVKNQKKIFCGQVWPVDQQLYYKSY) the chain is Extracellular. Residues 224-244 (FLFVFGIEFLGPVFTMTLCYA) form a helical membrane-spanning segment. At 245 to 273 (RISRELWFKAVPGFQTEQIRKRLRCRRKT) the chain is on the cytoplasmic side. The chain crosses the membrane as a helical span at residues 274–294 (VLVLMCILTAYVLCWAPFYGF). The Extracellular segment spans residues 295–313 (TIVRDFFPTVFVKEKHYLT). Residues 314 to 334 (AFYVVECIAMSNSMINTVCFV) traverse the membrane as a helical segment. Residues 335–384 (TVKNSTMKYFKKMLLLHWRPSHHGSKSSADLDLKTSRLPATEEVDCIRLK) are Cytoplasmic-facing.

It belongs to the G-protein coupled receptor 1 family. Homodimer.

Its subcellular location is the cell membrane. In terms of biological role, receptor for prokineticin 2. Exclusively coupled to the G(q) subclass of heteromeric G proteins. Activation leads to mobilization of calcium, stimulation of phosphoinositide turnover and activation of p44/p42 mitogen-activated protein kinase. This is Prokineticin receptor 2 (PROKR2) from Bos taurus (Bovine).